Here is a 219-residue protein sequence, read N- to C-terminus: Probable GTP-binding protein EngB (219 aa).

Positions 24 to 207 (VQPEIAFAGR…HALIESWVRP (184 aa)) constitute an EngB-type G domain. Residues 32–39 (GRSNAGKS), 59–63 (GRTQH), 81–84 (DLPG), 148–151 (TKCD), and 186–188 (FSA) contribute to the GTP site. The Mg(2+) site is built by S39 and T61.

The protein belongs to the TRAFAC class TrmE-Era-EngA-EngB-Septin-like GTPase superfamily. EngB GTPase family. It depends on Mg(2+) as a cofactor.

Its function is as follows. Necessary for normal cell division and for the maintenance of normal septation. In Burkholderia multivorans (strain ATCC 17616 / 249), this protein is Probable GTP-binding protein EngB.